We begin with the raw amino-acid sequence, 296 residues long: NAD kinase (296 aa).

The active-site Proton acceptor is the D72. Residues 72 to 73 (DG), 146 to 147 (ND), R157, K174, D176, 187 to 192 (TAYALS), and Q247 each bind NAD(+).

Belongs to the NAD kinase family. A divalent metal cation serves as cofactor.

It is found in the cytoplasm. The catalysed reaction is NAD(+) + ATP = ADP + NADP(+) + H(+). In terms of biological role, involved in the regulation of the intracellular balance of NAD and NADP, and is a key enzyme in the biosynthesis of NADP. Catalyzes specifically the phosphorylation on 2'-hydroxyl of the adenosine moiety of NAD to yield NADP. The chain is NAD kinase from Pseudomonas putida (strain W619).